Consider the following 550-residue polypeptide: MNFSNGSKSSTFTIAPSGSCIALPPQRGVATSKYAVHASCLQEYLDKEAWKDDTLIIDLRPVSEFSKSRIKGSVNLSLPATLIKRPAFSVARIISNLHDVDDKRDFQNWQEFSSILVCVPAWIANYVTNAEVIGEKFRKESYSGDFGILDLDYSKVSGKYPSVIDNSPVKSKLGALPSARPRLSYSAAQTAPISLSSEGSDYFSRPPPTPNVAGLSLNNFFCPLPENKDNKSSPFGSATVQTPCLHSVPDAFTNPDVATLYQKFLRLQSLEHQRLVSCSDRNSQWSTVDSLSNTSYKKNRYTDIVPYNCTRVHLKRTSPSELDYINASFIKTETSNYIACQGSISRSISDFWHMVWDNVENIGTIVMLGSLFEAGREMCTAYWPSNGIGDKQVYGDYCVKQISEENVDNSRFILRKFEIQNANFPSVKKVHHYQYPNWSDCNSPENVKSMVEFLKYVNNSHGSGNTIVHCSAGVGRTGTFIVLDTILRFPESKLSGFNPSVADSSDVVFQLVDHIRKQRMKMVQTFTQFKYVYDLIDSLQKSQVHFPVLT.

The region spanning Leu-260–Leu-539 is the Tyrosine-protein phosphatase domain. Ser-318 and Ser-320 each carry phosphoserine. Cys-470 (phosphocysteine intermediate) is an active-site residue.

It belongs to the protein-tyrosine phosphatase family. Non-receptor class subfamily.

Its subcellular location is the cytoplasm. It carries out the reaction O-phospho-L-tyrosyl-[protein] + H2O = L-tyrosyl-[protein] + phosphate. In terms of biological role, plays a role in inhibiting the onset of mitosis. Dephosphorylates sty1/spc1 and wis1/spc2/sty2. This is Tyrosine-protein phosphatase 1 (pyp1) from Schizosaccharomyces pombe (strain 972 / ATCC 24843) (Fission yeast).